The following is an 826-amino-acid chain: Outer membrane usher protein YehB (826 aa).

An N-terminal signal peptide occupies residues M1–A22. C809 and C825 form a disulfide bridge.

The protein belongs to the fimbrial export usher family.

Its subcellular location is the cell outer membrane. Its function is as follows. Part of the yehABCD fimbrial operon. Could contribute to adhesion to various surfaces in specific environmental niches. Probably involved in the export and assembly of fimbrial subunits across the outer membrane. In Escherichia coli (strain K12), this protein is Outer membrane usher protein YehB (yehB).